A 5148-amino-acid polypeptide reads, in one-letter code: E3 ubiquitin-protein ligase RNF213 (5148 aa).

The segment covering 38–48 (DNTLVVSSTPE) has biased composition (polar residues). The interval 38 to 341 (DNTLVVSSTP…QAAAPEPTSA (304 aa)) is disordered. Over residues 69-78 (PGKELEKPEE) the composition is skewed to basic and acidic residues. Residues 101 to 113 (GTISSSEAPSSGL) are compositionally biased toward polar residues. A compositionally biased stretch (low complexity) spans 130-146 (PQNQAQQGGAASQPGHP). Serine 196 carries the phosphoserine modification. 3 stretches are compositionally biased toward basic and acidic residues: residues 233 to 245 (SKGETSGQEKKVP), 257 to 267 (AGKETGEDVRK), and 279 to 289 (KHGDQEAELKG). The span at 319 to 335 (AAAVKTQQAAAPQQAAA) shows a compositional bias: low complexity. A Glycyl lysine isopeptide (Lys-Gly) (interchain with G-Cter in SUMO2) cross-link involves residue lysine 1128. ATP-binding positions include 1957-1962 (GVGKSL), glutamate 2060, alanine 2114, aspartate 2116, and arginine 2177. Serine 2234 bears the Phosphoserine mark. The ATP site is built by lysine 2460 and serine 2535. Residues 3435–3465 (EEMEIETSQSKELAEEQMEVEDSEEMKKASD) are a coiled coil. The Zn(2+) site is built by cysteine 3947, cysteine 3950, cysteine 3962, histidine 3964, cysteine 3967, cysteine 3970, cysteine 3982, cysteine 3985, cysteine 4451, and histidine 4455. The RING-type zinc-finger motif lies at 3947 to 3986 (CFICHGDAQDPVCLPCDHVYCLRCIQTWLIPGQMMCPYCL). The RZ-type zinc finger occupies 4429 to 4501 (MPEDLLVHAR…IRNNEDRTQT (73 aa)). The Nucleophile; for E3 ubiquitin-lipopolysaccharide ligase activity role is filled by cysteine 4462. Residues cysteine 4471 and cysteine 4474 each contribute to the Zn(2+) site.

It belongs to the AAA ATPase family. Monomer. Interacts with UBE2L3/UBCH7; UBE2L3/UBCH7 is the most efficient ubiquitin-conjugating enzyme E2 for the ubiquitin ligase activity. Interacts with UBE2N/UBC13; promoting 'Lys-63'-linked ubiquitination of target proteins.

It localises to the cytoplasm. Its subcellular location is the cytosol. It is found in the lipid droplet. The enzyme catalyses S-ubiquitinyl-[E2 ubiquitin-conjugating enzyme]-L-cysteine + [acceptor protein]-L-lysine = [E2 ubiquitin-conjugating enzyme]-L-cysteine + N(6)-ubiquitinyl-[acceptor protein]-L-lysine.. The catalysed reaction is ATP + H2O = ADP + phosphate + H(+). It participates in protein modification; protein ubiquitination. Functionally, atypical E3 ubiquitin ligase that can catalyze ubiquitination of both proteins and lipids, and which is involved in various processes, such as lipid metabolism, angiogenesis and cell-autonomous immunity. Acts as a key immune sensor by catalyzing ubiquitination of the lipid A moiety of bacterial lipopolysaccharide (LPS) via its RZ-type zinc-finger: restricts the proliferation of cytosolic bacteria, such as Salmonella, by generating the bacterial ubiquitin coat through the ubiquitination of LPS. Also acts indirectly by mediating the recruitment of the LUBAC complex, which conjugates linear polyubiquitin chains. Ubiquitination of LPS triggers cell-autonomous immunity, such as antibacterial autophagy, leading to degradation of the microbial invader. Involved in lipid metabolism by regulating fat storage and lipid droplet formation; act by inhibiting the lipolytic process. Also regulates lipotoxicity by inhibiting desaturation of fatty acids. Also acts as an E3 ubiquitin-protein ligase via its RING-type zinc finger: mediates 'Lys-63'-linked ubiquitination of target proteins. Involved in the non-canonical Wnt signaling pathway in vascular development: acts by mediating ubiquitination and degradation of FLNA and NFATC2 downstream of RSPO3, leading to inhibit the non-canonical Wnt signaling pathway and promoting vessel regression. Also has ATPase activity; ATPase activity is required for ubiquitination of LPS. In Mus musculus (Mouse), this protein is E3 ubiquitin-protein ligase RNF213.